We begin with the raw amino-acid sequence, 421 residues long: Odorant receptor 67b (421 aa).

The Cytoplasmic portion of the chain corresponds to M1–R48. Residues I49–N69 form a helical membrane-spanning segment. The Extracellular portion of the chain corresponds to Y70–M71. A helical membrane pass occupies residues I72–V92. Residues K93–Q151 are Cytoplasmic-facing. Residues V152–F172 form a helical membrane-spanning segment. Topologically, residues Q173–Q217 are extracellular. A helical transmembrane segment spans residues S218–T238. Topologically, residues R239–N289 are cytoplasmic. Residues L290–L310 traverse the membrane as a helical segment. Over Y311 to T315 the chain is Extracellular. The chain crosses the membrane as a helical span at residues V316 to L336. Residues E337–R384 are Cytoplasmic-facing. Residues T385 to F405 form a helical membrane-spanning segment. Residues R406–K421 are Extracellular-facing.

Belongs to the insect chemoreceptor superfamily. Heteromeric odorant receptor channel (TC 1.A.69) family. Or63a subfamily. As to quaternary structure, interacts with Orco. Complexes exist early in the endomembrane system in olfactory sensory neurons (OSNs), coupling these complexes to the conserved ciliary trafficking pathway.

Its subcellular location is the cell membrane. Its function is as follows. Odorant receptor which mediates acceptance or avoidance behavior, depending on its substrates. The odorant receptor repertoire encodes a large collection of odor stimuli that vary widely in identity, intensity, and duration. May form a complex with Orco to form odorant-sensing units, providing sensitive and prolonged odorant signaling and calcium permeability. Involved in the behavioral responses to ethyl acetate, pentyl acetate, methyl caproate, anisole, heptanal, 2-heptanone, r-carvone, nonanoic acid, and pyrazines. In Drosophila melanogaster (Fruit fly), this protein is Odorant receptor 67b (Or67b).